We begin with the raw amino-acid sequence, 79 residues long: UPF0154 protein llmg_1186 (79 aa).

A helical membrane pass occupies residues 4–24 (ILAILLMVVCLLAGFFLGTWF).

It belongs to the UPF0154 family.

The protein resides in the cell membrane. The chain is UPF0154 protein llmg_1186 from Lactococcus lactis subsp. cremoris (strain MG1363).